Reading from the N-terminus, the 308-residue chain is Ribosomal RNA small subunit methyltransferase H (308 aa).

S-adenosyl-L-methionine contacts are provided by residues 34 to 36 (GGH), aspartate 54, phenylalanine 80, aspartate 101, and glutamine 108.

Belongs to the methyltransferase superfamily. RsmH family.

It localises to the cytoplasm. The catalysed reaction is cytidine(1402) in 16S rRNA + S-adenosyl-L-methionine = N(4)-methylcytidine(1402) in 16S rRNA + S-adenosyl-L-homocysteine + H(+). Functionally, specifically methylates the N4 position of cytidine in position 1402 (C1402) of 16S rRNA. The protein is Ribosomal RNA small subunit methyltransferase H of Ureaplasma urealyticum serovar 10 (strain ATCC 33699 / Western).